We begin with the raw amino-acid sequence, 85 residues long: Large ribosomal subunit protein bL27 (85 aa).

The tract at residues 1-22 (MAHKKAGGSTRNGRDSESKRLG) is disordered.

This sequence belongs to the bacterial ribosomal protein bL27 family.

This is Large ribosomal subunit protein bL27 from Vibrio vulnificus (strain CMCP6).